Here is a 242-residue protein sequence, read N- to C-terminus: Galectin-3 (242 aa).

Positions 1 to 35 (MADGFSLNDALSGSGHPPNQGWPGPWGNQPAGPGG) are disordered. At Ala-2 the chain carries N-acetylalanine. Phosphoserine; by CK1 is present on Ser-6. At Ser-12 the chain carries Phosphoserine. Residues 17 to 31 (PPNQGWPGPWGNQPA) are compositionally biased toward low complexity. 4 tandem repeats follow at residues 35–43 (GYPGAAYPG), 44–52 (AYPGHAPGA), 53–61 (YPGQAPPGP), and 62–70 (YPGPGAHGA). The 7 X 9 AA tandem repeats of Y-P-G-X(3)-P-[GS]-A stretch occupies residues 35–98 (GYPGAAYPGA…GAGAYPGASP (64 aa)). Residues 55–93 (GQAPPGPYPGPGAHGAYPGQPGGPGAYPSPGQPSGAGAY) form a disordered region. Residues 71 to 80 (YPGQPGGPGA) form a 5; approximate repeat. Residues 80–93 (AYPSPGQPSGAGAY) show a composition bias toward low complexity. One copy of the 6; approximate repeat lies at 81–92 (YPSPGQPSGAGA). A 7; truncated repeat occupies 93–98 (YPGASP). The Galectin domain occupies 110–240 (YDLPLPGGVM…DIQLTSASHA (131 aa)). A beta-D-galactoside is bound at residue 173–181 (WGREERQTT). The Nuclear export signal motif lies at 218 to 233 (RNLKEINKLGISGDIQ).

Probably forms homo- or heterodimers. Interacts with DMBT1. Interacts with CD6 and ALCAM. Forms a complex with the ITGA3, ITGB1 and CSPG4. Interacts with LGALS3BP, LYPD3, ZFTRAF1 and UACA. Interacts with TRIM16; this interaction mediates autophagy of damage endomembranes. Interacts with cargo receptor TMED10; the interaction mediates the translocation from the cytoplasm into the ERGIC (endoplasmic reticulum-Golgi intermediate compartment) and thereby secretion. Interacts with and inhibits by binding NCR3/NKp30.

The protein resides in the cytoplasm. It is found in the nucleus. The protein localises to the secreted. Galactose-specific lectin which binds IgE. May mediate with the alpha-3, beta-1 integrin the stimulation by CSPG4 of endothelial cells migration. Together with DMBT1, required for terminal differentiation of columnar epithelial cells during early embryogenesis. In the nucleus: acts as a pre-mRNA splicing factor. Involved in acute inflammatory responses including neutrophil activation and adhesion, chemoattraction of monocytes macrophages, opsonization of apoptotic neutrophils, and activation of mast cells. Together with TRIM16, coordinates the recognition of membrane damage with mobilization of the core autophagy regulators ATG16L1 and BECN1 in response to damaged endomembranes. When secreted, interacts with NK cell-activating receptor NCR3/NKp30 acting as an inhibitory ligand which antagonizes NK cell attack. The sequence is that of Galectin-3 (LGALS3) from Oryctolagus cuniculus (Rabbit).